We begin with the raw amino-acid sequence, 393 residues long: Thermostable carboxypeptidase 1 (393 aa).

Positions 104, 109, and 245 each coordinate Zn(2+). Tyr-302 functions as the Proton donor in the catalytic mechanism. The active-site Nucleophile is Glu-373.

The protein belongs to the peptidase M20 family. In terms of assembly, homotetramer. Zn(2+) serves as cofactor.

Its function is as follows. Can release basic, acidic, aromatic, and, to a lesser extent, aliphatic amino acids. The chain is Thermostable carboxypeptidase 1 (cpsA1) from Saccharolobus solfataricus (strain ATCC 35092 / DSM 1617 / JCM 11322 / P2) (Sulfolobus solfataricus).